Here is a 734-residue protein sequence, read N- to C-terminus: MASRFPRFSQGLSQDPTTRRIWFGIATAHDFESHDNITEERLYQKIFASHFGQLAIIFLWTSGNLFHVAWQGNFEAWIQDPLHVRPIAHAIWDPHFGQPAIEAFTRGGASGPVNIAYPGVYQWWYTIGLRTNQDLYTGALSLLILSAIFLIAGWLHLQPKWKPSVSWFKNAESRLNHHLSGLFGVSSLAWTGHLVHVAIPESRGEHVRWDNLLTALPHPQGLGPFFAGQWSVYAQNADSSSHLFGTSQGAGTAILTFLGGFHPQTQSLWLTDIAHHHLAIAVVFIIAGHMYRTNFGIGHSMKEILEAHTPPGGRLGRGHKGLYDTINNSLHFQLGLALASLGVITSLVAQHMYSLPAYAFIAQDFTTQAALYTHHQYIAGFIMTGAFAHGAIFLIRDYNPEQNEGNVLARMLEHKEAIISHLSWASLFLGFHTLGLYVHNDVMLAFGTPEKQILIEPVSAQWIQSAHGKALYGFDVLLSSANSPAFNAGQSIWLPGWLDTINNNSNSLFLTIGPGDFLVHHAIALGLHTTTLILVKGALDARGSKLMPDKKEFGYSFPCDGPGRGGTCDISAWDAFYSAVFWMLNTIGWVTLYWHWKHITLWQGNVAQFNESSTYLMGWLRDYLWLNPSQLINGYNPFGMNSLSVWAWMFLFGHLVWAIGFMFLISWRGYWQELIETLAWAHERTPLANLVRWKDKPVALSIVQARLVGLAHFSVGYIFTYAAFLIASTSGKFG.

The next 8 helical transmembrane spans lie at 46 to 69 (IFAS…FHVA), 135 to 158 (LYTG…LHLQ), 175 to 199 (LNHH…HVAI), 273 to 291 (IAHH…GHMY), 330 to 353 (LHFQ…QHMY), 369 to 395 (AALY…IFLI), 417 to 439 (AIIS…LYVH), and 517 to 535 (FLVH…LILV). [4Fe-4S] cluster contacts are provided by Cys559 and Cys568. A run of 2 helical transmembrane segments spans residues 575–596 (AFYS…YWHW) and 643–665 (LSVW…MFLI). Positions 654, 662, and 670 each coordinate chlorophyll a. Trp671 is a binding site for phylloquinone. A helical membrane pass occupies residues 707–727 (LVGLAHFSVGYIFTYAAFLIA).

This sequence belongs to the PsaA/PsaB family. In terms of assembly, the PsaA/B heterodimer binds the P700 chlorophyll special pair and subsequent electron acceptors. PSI consists of a core antenna complex that captures photons, and an electron transfer chain that converts photonic excitation into a charge separation. The eukaryotic PSI reaction center is composed of at least 11 subunits. P700 is a chlorophyll a/chlorophyll a' dimer, A0 is one or more chlorophyll a, A1 is one or both phylloquinones and FX is a shared 4Fe-4S iron-sulfur center. is required as a cofactor.

It localises to the plastid. It is found in the chloroplast thylakoid membrane. The enzyme catalyses reduced [plastocyanin] + hnu + oxidized [2Fe-2S]-[ferredoxin] = oxidized [plastocyanin] + reduced [2Fe-2S]-[ferredoxin]. PsaA and PsaB bind P700, the primary electron donor of photosystem I (PSI), as well as the electron acceptors A0, A1 and FX. PSI is a plastocyanin-ferredoxin oxidoreductase, converting photonic excitation into a charge separation, which transfers an electron from the donor P700 chlorophyll pair to the spectroscopically characterized acceptors A0, A1, FX, FA and FB in turn. Oxidized P700 is reduced on the lumenal side of the thylakoid membrane by plastocyanin. In Huperzia lucidula (Shining clubmoss), this protein is Photosystem I P700 chlorophyll a apoprotein A2.